The following is a 171-amino-acid chain: S-ribosylhomocysteine lyase (171 aa).

Positions 54, 58, and 128 each coordinate Fe cation.

Belongs to the LuxS family. As to quaternary structure, homodimer. The cofactor is Fe cation.

It catalyses the reaction S-(5-deoxy-D-ribos-5-yl)-L-homocysteine = (S)-4,5-dihydroxypentane-2,3-dione + L-homocysteine. Involved in the synthesis of autoinducer 2 (AI-2) which is secreted by bacteria and is used to communicate both the cell density and the metabolic potential of the environment. The regulation of gene expression in response to changes in cell density is called quorum sensing. Catalyzes the transformation of S-ribosylhomocysteine (RHC) to homocysteine (HC) and 4,5-dihydroxy-2,3-pentadione (DPD). The sequence is that of S-ribosylhomocysteine lyase from Escherichia fergusonii (strain ATCC 35469 / DSM 13698 / CCUG 18766 / IAM 14443 / JCM 21226 / LMG 7866 / NBRC 102419 / NCTC 12128 / CDC 0568-73).